We begin with the raw amino-acid sequence, 118 residues long: Alpha-amylase inhibitor 4 (118 aa).

4 disulfides stabilise this stretch: Cys-7-Cys-60, Cys-21-Cys-49, Cys-30-Cys-82, and Cys-50-Cys-101.

The protein belongs to the protease inhibitor I6 (cereal trypsin/alpha-amylase inhibitor) family.

It localises to the secreted. Alpha-amylase inhibitor. This chain is Alpha-amylase inhibitor 4, found in Sorghum bicolor (Sorghum).